The chain runs to 334 residues: N,N'-diacetyllegionaminic acid synthase (334 aa).

Residues 282 to 334 (SLVAKKDIKKGEIFSEGNLTTKRPANGISAMRYEEFLGKIATKNYKEDELIRE) enclose the AFP-like domain.

The enzyme catalyses 2,4-diacetamido-2,4,6-trideoxy-alpha-D-mannopyranose + phosphoenolpyruvate + H2O = N,N-diacetyllegionaminate + phosphate. In terms of biological role, involved in biosynthesis of legionaminic acid (5,7-diamino-3,5,7,9-tetradeoxy-D-glycero-D-galacto-non-2-ulosonic acid)(Leg), a sialic acid-like derivative that is incorporated into flagellin via O-linkage to Ser/Thr. Catalyzes the condensation of 2,4-diacetamido-2,4,6-trideoxymannose with phosphoenolpyruvate (PEP) to give N,N'-diacetyllegionaminic acid. The chain is N,N'-diacetyllegionaminic acid synthase (legI) from Campylobacter jejuni subsp. jejuni serotype O:2 (strain ATCC 700819 / NCTC 11168).